A 622-amino-acid polypeptide reads, in one-letter code: DNA mismatch repair protein MutL (622 aa).

Residues 376–401 (REVREGSSTGRAGNYQPPEPPSREAM) are disordered.

This sequence belongs to the DNA mismatch repair MutL/HexB family.

Its function is as follows. This protein is involved in the repair of mismatches in DNA. It is required for dam-dependent methyl-directed DNA mismatch repair. May act as a 'molecular matchmaker', a protein that promotes the formation of a stable complex between two or more DNA-binding proteins in an ATP-dependent manner without itself being part of a final effector complex. This chain is DNA mismatch repair protein MutL, found in Aeromonas hydrophila subsp. hydrophila (strain ATCC 7966 / DSM 30187 / BCRC 13018 / CCUG 14551 / JCM 1027 / KCTC 2358 / NCIMB 9240 / NCTC 8049).